An 822-amino-acid polypeptide reads, in one-letter code: Nose resistant to fluoxetine protein 6 (822 aa).

Residues 1 to 24 (MGNMRRLLIFAVLVILTVISNSKS) form the signal peptide. Asparagine 236 is a glycosylation site (N-linked (GlcNAc...) asparagine). Helical transmembrane passes span 306–326 (LAMF…FGTL), 617–637 (PYIR…LNAW), and 655–675 (IICW…LYWF).

This sequence belongs to the acyltransferase 3 family. In L1 larvae through to adult, hyp3 and hyp5, the most anterior cells in the hypodermis, and in intestine. Other hypodermal cells show weaker expression.

The protein localises to the membrane. Functionally, plays a role in the uptake of a range of molecules including lipids and xenobiotic compounds from the intestine to surrounding tissues. Mediates transport of lipids from intestine to the reproductive tract. Required for efficient yolk transport into oocytes. Vital for embryonic development. The protein is Nose resistant to fluoxetine protein 6 (nrf-6) of Caenorhabditis elegans.